The sequence spans 520 residues: Beta-2-syntrophin (520 aa).

The disordered stretch occupies residues 45–95; the sequence is EPPAAAFNGLPNGGGGESLPGSPNRGLGPPSPPAPPRGPAGEASASPPVRR. Low complexity predominate over residues 63 to 72; that stretch reads LPGSPNRGLG. Over residues 73 to 82 the composition is skewed to pro residues; it reads PPSPPAPPRG. 8 positions are modified to phosphoserine: Ser-75, Ser-90, Ser-109, Ser-191, Ser-202, Ser-213, Ser-373, and Ser-375. Positions 83–93 are enriched in low complexity; the sequence is PAGEASASPPV. The region spanning 95-178 is the PDZ domain; the sequence is RVRVVKQEAG…EVLLEVKFIR (84 aa). PH domains lie at 143 to 280 and 305 to 417; these read ILSV…TNIM and EVKH…QGCH. The disordered stretch occupies residues 195-220; the sequence is WEGASPQSPSFSGSEDSGSPKHQNTT. A compositionally biased stretch (low complexity) spans 197-211; it reads GASPQSPSFSGSEDS. The region spanning 464–520 is the SU domain; it reads PFERLKMSADDGIRNLYLDFGGPEGELTMDLHSCPKPIVFVLHTFLSAKVTRMGLLV. The interval 498–520 is calmodulin-binding; it reads PKPIVFVLHTFLSAKVTRMGLLV.

Belongs to the syntrophin family. Monomer and homodimer. Interacts with the dystrophin protein DMD and related protein DTNA; and with the other members of the syntrophin family: SNTA1 and SNTB1. Interacts with the neuroregulin receptor ERBB4. Interacts with PTPRN when phosphorylated, protecting PTPRN from protein cleavage by CAPN1. Dephosphorylation upon insulin stimulation disrupts the interaction with PTPRN and results in the cleavage of PTPRN. Interacts with the sodium channel proteins SCN4A and SCN5A. Interacts with SAST, MAST205, microtubules and microtubule-associated proteins. Interacts with the dystrophin related protein UTRN. Interacts with DTNB. Phosphorylated. Partially dephosphorylated upon insulin stimulation. As to expression, ubiquitous. Expressed at high levels in the testis.

The protein resides in the membrane. It localises to the cytoplasmic vesicle. It is found in the secretory vesicle membrane. Its subcellular location is the cell junction. The protein localises to the cytoplasm. The protein resides in the cytoskeleton. In terms of biological role, adapter protein that binds to and probably organizes the subcellular localization of a variety of membrane proteins. May link various receptors to the actin cytoskeleton and the dystrophin glycoprotein complex. May play a role in the regulation of secretory granules via its interaction with PTPRN. The protein is Beta-2-syntrophin (Sntb2) of Mus musculus (Mouse).